Reading from the N-terminus, the 468-residue chain is 6-phospho-beta-galactosidase (468 aa).

D-galactose 6-phosphate contacts are provided by Gln-19, His-116, Asn-159, Glu-160, and Asn-297. The Proton donor role is filled by Glu-160. Glu-375 serves as the catalytic Nucleophile. D-galactose 6-phosphate-binding residues include Ser-428, Trp-429, Lys-435, and Tyr-437.

The protein belongs to the glycosyl hydrolase 1 family.

The catalysed reaction is a 6-phospho-beta-D-galactoside + H2O = D-galactose 6-phosphate + an alcohol. The protein operates within carbohydrate metabolism; lactose degradation; D-galactose 6-phosphate and beta-D-glucose from lactose 6-phosphate: step 1/1. The protein is 6-phospho-beta-galactosidase of Streptococcus pyogenes serotype M1.